Consider the following 313-residue polypeptide: Porphobilinogen deaminase (313 aa).

Cysteine 242 is subject to S-(dipyrrolylmethanemethyl)cysteine.

Belongs to the HMBS family. As to quaternary structure, monomer. The cofactor is dipyrromethane.

The catalysed reaction is 4 porphobilinogen + H2O = hydroxymethylbilane + 4 NH4(+). It functions in the pathway porphyrin-containing compound metabolism; protoporphyrin-IX biosynthesis; coproporphyrinogen-III from 5-aminolevulinate: step 2/4. In terms of biological role, tetrapolymerization of the monopyrrole PBG into the hydroxymethylbilane pre-uroporphyrinogen in several discrete steps. This is Porphobilinogen deaminase from Pseudomonas fluorescens (strain ATCC BAA-477 / NRRL B-23932 / Pf-5).